A 555-amino-acid polypeptide reads, in one-letter code: Dihydroxy-acid dehydratase (555 aa).

Aspartate 78 contacts Mg(2+). Residue cysteine 119 coordinates [2Fe-2S] cluster. Residues aspartate 120 and lysine 121 each coordinate Mg(2+). An N6-carboxylysine modification is found at lysine 121. Residue cysteine 191 participates in [2Fe-2S] cluster binding. Glutamate 444 is a Mg(2+) binding site. The active-site Proton acceptor is serine 470.

This sequence belongs to the IlvD/Edd family. As to quaternary structure, homodimer. [2Fe-2S] cluster is required as a cofactor. It depends on Mg(2+) as a cofactor.

It carries out the reaction (2R)-2,3-dihydroxy-3-methylbutanoate = 3-methyl-2-oxobutanoate + H2O. It catalyses the reaction (2R,3R)-2,3-dihydroxy-3-methylpentanoate = (S)-3-methyl-2-oxopentanoate + H2O. It functions in the pathway amino-acid biosynthesis; L-isoleucine biosynthesis; L-isoleucine from 2-oxobutanoate: step 3/4. It participates in amino-acid biosynthesis; L-valine biosynthesis; L-valine from pyruvate: step 3/4. In terms of biological role, functions in the biosynthesis of branched-chain amino acids. Catalyzes the dehydration of (2R,3R)-2,3-dihydroxy-3-methylpentanoate (2,3-dihydroxy-3-methylvalerate) into 2-oxo-3-methylpentanoate (2-oxo-3-methylvalerate) and of (2R)-2,3-dihydroxy-3-methylbutanoate (2,3-dihydroxyisovalerate) into 2-oxo-3-methylbutanoate (2-oxoisovalerate), the penultimate precursor to L-isoleucine and L-valine, respectively. This is Dihydroxy-acid dehydratase from Oleidesulfovibrio alaskensis (strain ATCC BAA-1058 / DSM 17464 / G20) (Desulfovibrio alaskensis).